We begin with the raw amino-acid sequence, 63 residues long: Putative ankyrin repeat protein RF_p14 (63 aa).

2 ANK repeats span residues 11 to 43 (KLNQ…CRDH) and 44 to 63 (QGDT…ILDI).

This chain is Putative ankyrin repeat protein RF_p14, found in Rickettsia felis (strain ATCC VR-1525 / URRWXCal2) (Rickettsia azadi).